A 208-amino-acid chain; its full sequence is Histone H1.3 (208 aa).

Ser-2 is subject to N-acetylserine. An H15 domain is found at 37–113; that stretch reads AHPPYINMVT…GASGRFRVTE (77 aa). The disordered stretch occupies residues 113-208; sequence EKKAAAAKKP…PAKKAVAPKT (96 aa). 2 stretches are compositionally biased toward basic residues: residues 148 to 158 and 165 to 191; these read KAKKTTATKTK and KKVK…KSAP. Residues 192-208 are compositionally biased toward low complexity; sequence KKAAAAKPAKKAVAPKT.

The protein belongs to the histone H1/H5 family.

The protein localises to the nucleus. The protein resides in the chromosome. Its function is as follows. Histones H1 are necessary for the condensation of nucleosome chains into higher-order structures. This Caenorhabditis elegans protein is Histone H1.3 (hil-3).